A 307-amino-acid chain; its full sequence is Type 2A encapsulin shell protein (307 aa).

It belongs to the encapsulin family. Family 2A subfamily. Homooligomeric. The encapsulin nanocompartment is formed by 60 subunits; monomers form pentamers which assemble to form shells. There are 12 charged pores where the pentamers meet as well as 3-fold axis channels and dimer channels.

The protein resides in the encapsulin nanocompartment. Functionally, shell component of a type 2A encapsulin nanocompartment. Forms encapsulin nanocompartments about 24 nm in diameter from 60 monomers. Probably encapsulates at least cysteine desulfurase (CyD) and allows passage of cysteine into its interior, probably involved in sulfur metabolism. This Mycobacterium avium protein is Type 2A encapsulin shell protein.